The chain runs to 30 residues: Methanobactin mb-OB3b (30 aa).

A propeptide spanning residues 1–19 is cleaved from the precursor; sequence MTVKIAQKKVLPVIGRAAA. The 2-(3-methylbutanoyl)-5-hydroxyoxazole-4-carbothionic acid (Leu-Cys) cross-link spans 20-21; sequence LC. Cu(2+)-binding residues include cysteine 21 and cysteine 27. Cysteine 24 and cysteine 29 are joined by a disulfide. The proline 5-hydroxy-oxazole-4-carbothionic acid (Pro-Cys) cross-link spans 26–27; it reads PC.

In terms of assembly, monomer. In the absence of copper, may exist as a dimer or an oligomer.

It localises to the secreted. It is found in the cytoplasm. The catalysed reaction is 2 superoxide + 2 H(+) = H2O2 + O2. In terms of biological role, chalkophore involved in scavenging, uptake and suppression of toxicity of copper. Each apo-methanobactin (apo-mb) complexes 1 Cu(2+) or Cu(1+) ion to form Cu(1+)-mb (Cu-mb) which is then taken up by the cell. Enhances growth rate in the presence of copper and reduces growth lag upon exposition to elevated levels of copper. Cu-mb contributes to the switchover from soluble methane monooxygenase (sMMO) to the membrane-bound particulate MMO (pMMO) by inducing transcription of pMMO subunit A. It also stimulates the enzymatic activity of pMMO. In the absence of copper, binds other metal ions, like Zn(2+), Ag(1+), Au(3+), Co(2+), Cd(2+), Fe(3+), Hg(2+), Mn(2+), Ni(2+), Pb(2+) or U(6+), but not Ba(2+), Ca(2+), La(2+), Mg(2+) or Sr(2+). Uptake is an active process, which may involve TonB-dependent transporters, and as such does not involve porins. Cu-Mb can be taken up by other methanotrophic bacteria but not by E.coli. Has Cu-dependent superoxide dismutase-like activity. Shows reductant-dependent oxidase and hydrogen peroxide reductase activities. Reduces copper-levels in liver in a rat model of Wilson disease. This is Methanobactin mb-OB3b from Methylosinus trichosporium.